The sequence spans 337 residues: Low-density lipoprotein receptor class A domain-containing protein 3 (337 aa).

The signal sequence occupies residues 1-13 (MWLLYLILGSVES). Residues 14-169 (QLLPGNNHTT…NQLLYYPSIT (156 aa)) are Extracellular-facing. An N-linked (GlcNAc...) asparagine glycan is attached at N20. 3 consecutive LDL-receptor class A domains span residues 24-61 (ECNIPGNFMCSNGRCIPGGWQCDGNPDCFDESDEKECP), 66-103 (RCGPNFFPCTSGIHCIIARFQCNGFEDCPDGSDEENCT), and 108-144 (LCSNSRFHCKNHLCIDKSFVCDGQNNCLDNSDEEHCH). 9 disulfides stabilise this stretch: C25–C38, C33–C51, C45–C60, C67–C80, C74–C93, C87–C102, C109–C121, C116–C134, and C128–C143. N-linked (GlcNAc...) asparagine glycosylation is present at N101. Residues 170-190 (YTIIGSSVIFVLVVALLALVL) traverse the membrane as a helical segment. Over 191-337 (HHQRKRNLMS…DDLPSTEVDV (147 aa)) the chain is Cytoplasmic. The segment covering 243–253 (QQPVSVESPPS) has biased composition (polar residues). A disordered region spans residues 243-337 (QQPVSVESPP…DDLPSTEVDV (95 aa)). Residues 291-303 (RSRTGSSASAGST) show a composition bias toward low complexity.

It belongs to the LDLR family.

It localises to the cell membrane. The chain is Low-density lipoprotein receptor class A domain-containing protein 3 from Xenopus tropicalis (Western clawed frog).